An 86-amino-acid polypeptide reads, in one-letter code: Sodium channel neurotoxin MeuNaTxalpha-5 (86 aa).

A signal peptide spans 1-19 (MNYLILISFALLVITGVES). The LCN-type CS-alpha/beta domain occupies 21–85 (RDAYIAKPHN…VPIRIPGKCH (65 aa)). Intrachain disulfides connect cysteine 31–cysteine 84, cysteine 35–cysteine 57, cysteine 43–cysteine 67, and cysteine 47–cysteine 69. Position 86 (arginine 86) is a propeptide, removed by a carboxypeptidase.

It belongs to the long (4 C-C) scorpion toxin superfamily. Sodium channel inhibitor family. Alpha subfamily. As to expression, expressed by the venom gland.

The protein localises to the secreted. Functionally, alpha toxins bind voltage-independently at site-3 of sodium channels (Nav) and inhibit the inactivation of the activated channels, thereby blocking neuronal transmission. This toxin inhibits inactivation of Nav1.6/SCN8A (EC(50)=790 nM) and drosophila DmNav1 (EC(50)=280 nM). The toxin (1 uM) does not significantly shift the midpoint of activation at the two channels, but induces a significant depolarizing shift in the V(1/2) of inactivation of the channels. Has antimicrobial activity. This is Sodium channel neurotoxin MeuNaTxalpha-5 from Mesobuthus eupeus (Lesser Asian scorpion).